The following is a 544-amino-acid chain: Intercellular adhesion molecule 3 (544 aa).

The signal sequence occupies residues 1-31 (MIASGPPPRVYWTSLIFLLLACCLLPTGAQG). The Extracellular segment spans residues 32–486 (QTYQVRVEPK…MMDVQGRNPV (455 aa)). An Ig-like C2-type 1 domain is found at 48-105 (GEPLVVNCTLDCPGPGLISLETALSKEPHSRGLGWAAFRLTNVTGDMEILCSGICNKS). N-linked (GlcNAc...) asparagine glycosylation is found at Asn54, Asn89, Asn103, Asn112, Asn138, Asn190, Asn209, Asn243, Asn267, Asn296, Asn321, and Asn326. Cystine bridges form between Cys55–Cys98 and Cys59–Cys102. Residues 134–200 (GEELNLSCLV…FSCRSELDLR (67 aa)) form the Ig-like C2-type 2 domain. Cys141 and Cys193 form a disulfide bridge. Residues 237-302 (ETSWPVNCSL…IVCNVTLGVE (66 aa)) enclose the Ig-like C2-type 3 domain. Residues Cys244 and Cys295 are joined by a disulfide bond. Positions 330-383 (GTPVTVTCAAGPQVQVMLDGVPAAVPGQPAQLQLKATEMDDRRTFFCNATLKVH) constitute an Ig-like C2-type 4 domain. The cysteines at positions 337 and 376 are disulfide-linked. Asn377, Asn390, and Asn456 each carry an N-linked (GlcNAc...) asparagine glycan. Positions 417–470 (KTMHILQCQARGNPNPQLQCLREGSKFKVPVGIPFLVLLNYSGTYSCQAASSRG) constitute an Ig-like C2-type 5 domain. An intrachain disulfide couples Cys424 to Cys463. A helical transmembrane segment spans residues 487–511 (TINIVLGVLAILGLVTLAAASVYVF). Residues 512-544 (WVQRQHDIYHLTPRSTRWRLTSTQPVTVAEELS) lie on the Cytoplasmic side of the membrane.

The protein belongs to the immunoglobulin superfamily. ICAM family. Interacts with moesin/MSN. As to expression, leukocytes.

The protein localises to the membrane. ICAM proteins are ligands for the leukocyte adhesion protein LFA-1 (integrin alpha-L/beta-2). ICAM3 is also a ligand for integrin alpha-D/beta-2. In association with integrin alpha-L/beta-2, contributes to apoptotic neutrophil phagocytosis by macrophages. The protein is Intercellular adhesion molecule 3 (ICAM3) of Bos taurus (Bovine).